The chain runs to 276 residues: NH(3)-dependent NAD(+) synthetase (276 aa).

43-50 (GISGGVDS) is an ATP binding site. Asp49 lines the Mg(2+) pocket. Arg146 provides a ligand contact to deamido-NAD(+). Thr166 lines the ATP pocket. Glu171 is a Mg(2+) binding site. Deamido-NAD(+) is bound by residues Lys179 and Asp186. ATP is bound by residues Lys195 and Thr217. Deamido-NAD(+) is bound at residue 266-267 (HK).

This sequence belongs to the NAD synthetase family. Homodimer.

It carries out the reaction deamido-NAD(+) + NH4(+) + ATP = AMP + diphosphate + NAD(+) + H(+). It participates in cofactor biosynthesis; NAD(+) biosynthesis; NAD(+) from deamido-NAD(+) (ammonia route): step 1/1. Its function is as follows. Catalyzes the ATP-dependent amidation of deamido-NAD to form NAD. Uses ammonia as a nitrogen source. The sequence is that of NH(3)-dependent NAD(+) synthetase from Shewanella piezotolerans (strain WP3 / JCM 13877).